The sequence spans 534 residues: tRNA uridine(34) acetyltransferase (534 aa).

Positions 70–330 (KPVRTISGVA…GEFKPYREEE (261 aa)) are radical S-adenosyl-L-methionine (rSAM). Residues 73–344 (RTISGVAVVA…ISYAKSIMPK (272 aa)) enclose the Radical SAM core domain. [4Fe-4S] cluster-binding residues include Cys90, Cys95, and Cys98. Acetyl-CoA is bound at residue Lys150. The cysteines at positions 384 and 389 are disulfide-linked. In terms of domain architecture, N-acetyltransferase spans 387–534 (IRCREVGHVY…RVGAYMGKEL (148 aa)). Acetyl-CoA contacts are provided by residues 461-464 (QLHV), 485-487 (YGR), and Tyr518.

It belongs to the ELP3 family. The cofactor is [4Fe-4S] cluster.

The enzyme catalyses uridine(34) in tRNA + acetyl-CoA + S-adenosyl-L-methionine + H2O = 5-(carboxymethyl)uridine(34) in tRNA + 5'-deoxyadenosine + L-methionine + CoA + 2 H(+). Its pathway is tRNA modification. TRNA uridine(34) acetyltransferase, which mediates formation of carboxymethyluridine in the wobble base at position 34 in tRNAs. The proposed mechanism is the following: (i) recruits S-adenosyl-L-methionine and cleaves it to generate a 5'-deoxyadenosine radical (5'-dA) in the radical S-adenosyl-L-methionine (rSAM) region, (ii) hydrolyzes acetyl-CoA in the N-acetyltransferase domain and (iii) an acetyl radical is formed by the products of the two domains and (iv) is transferred onto the C5 position of uridine(34) in the bound tRNA molecule. Does not show protein lysine acetyltransferase activity. The protein is tRNA uridine(34) acetyltransferase of Methanocaldococcus infernus (strain DSM 11812 / JCM 15783 / ME).